The primary structure comprises 371 residues: Glycosyltransferase 8 domain-containing protein 1 (371 aa).

Over 1–7 (MSFRKVN) the chain is Cytoplasmic. The chain crosses the membrane as a helical; Signal-anchor for type II membrane protein span at residues 8-28 (IIIWVLAVVLFLLVLHHNFLS). The Lumenal segment spans residues 29-371 (LSSLLKNDIS…RRHMDTSNIK (343 aa)). The N-linked (GlcNAc...) asparagine glycan is linked to asparagine 257.

This sequence belongs to the glycosyltransferase 8 family.

It localises to the membrane. The protein is Glycosyltransferase 8 domain-containing protein 1 (Glt8d1) of Mus musculus (Mouse).